Here is an 842-residue protein sequence, read N- to C-terminus: Elongation factor 2 (842 aa).

A tr-type G domain is found at 17-346 (TNVRNMSVIA…MIVLHLPSPV (330 aa)). GTP contacts are provided by residues 26–33 (AHVDHGKS), 158–161 (NKVD), and 213–215 (SGL). At K509 the chain carries N6,N6,N6-trimethyllysine; by EFM3; alternate. An N6,N6-dimethyllysine; by EFM3; alternate modification is found at K509. K509 carries the N6-methyllysine; by EFM3; alternate modification. S579 bears the Phosphoserine mark. K613 is modified (N6,N6-dimethyllysine; by EFM2; alternate). An N6-methyllysine; by EFM2; alternate modification is found at K613. The residue at position 699 (H699) is a Diphthamide. A phosphothreonine mark is found at T713 and T763. Residue K841 forms a Glycyl lysine isopeptide (Lys-Gly) (interchain with G-Cter in ubiquitin) linkage.

Belongs to the TRAFAC class translation factor GTPase superfamily. Classic translation factor GTPase family. EF-G/EF-2 subfamily. In terms of assembly, binds to 80S ribosomes. Actively translating ribosomes show mutually exclusive binding of eIF5a (HYP2 or ANB1) and EFT1/eEF2. Interacts with the 40S ribosomal subunit protein RPL9A; the interaction is direct. Interacts with the 60S ribosomal subunit proteins RPL12A; the interaction is direct. Interacts with RPS23A; the interaction is direct. Interacts with 18S rRNA; the interaction is direct. Interacts with 25S rRNA; the interaction is direct. Interacts with RPL0. Interacts with STM1; promoting ribosome inactivation. In terms of processing, (Microbial infection) Diphthamide can be ADP-ribosylated by diphtheria toxin and by Pseudomonas exotoxin A, thus abolishing its function.

It is found in the cytoplasm. It carries out the reaction GTP + H2O = GDP + phosphate + H(+). Its pathway is protein biosynthesis; polypeptide chain elongation. Its activity is regulated as follows. Inhibited by fusidic acid and sordarin, which prevent the release of eEF2 from the ribosome after the translocation step. While fusidic acid acts on all eukaryotic eEF2, sordarin specifically binds and inhibits only selected fungal eEF2. Its function is as follows. Catalyzes the GTP-dependent ribosomal translocation step during translation elongation. During this step, the ribosome changes from the pre-translocational (PRE) to the post-translocational (POST) state as the newly formed A-site-bound peptidyl-tRNA and P-site-bound deacylated tRNA move to the P and E sites, respectively. Catalyzes the coordinated movement of the two tRNA molecules, the mRNA and conformational changes in the ribosome. This is Elongation factor 2 (EFT1) from Saccharomyces cerevisiae (strain ATCC 204508 / S288c) (Baker's yeast).